A 166-amino-acid polypeptide reads, in one-letter code: Ribosome maturation factor RimM (166 aa).

Residues 94–165 (EGEYYLGKLI…TIELKVLDLL (72 aa)) form the PRC barrel domain.

It belongs to the RimM family. In terms of assembly, binds ribosomal protein uS19.

It localises to the cytoplasm. Functionally, an accessory protein needed during the final step in the assembly of 30S ribosomal subunit, possibly for assembly of the head region. Essential for efficient processing of 16S rRNA. May be needed both before and after RbfA during the maturation of 16S rRNA. It has affinity for free ribosomal 30S subunits but not for 70S ribosomes. The chain is Ribosome maturation factor RimM from Borreliella afzelii (strain PKo) (Borrelia afzelii).